The primary structure comprises 119 residues: MGPESPDSIPPHGPGNGDGDQDLDIGVVVRPRTRTRKPSMYKVLMLNDDYTPMEFVVHVLERFFAKTRDEATSIMLQVHQRGVGICGVFTYEVAESKVTQVMDLARQNQHPLQCTIEKD.

The tract at residues 1–24 is disordered; that stretch reads MGPESPDSIPPHGPGNGDGDQDLD.

This sequence belongs to the ClpS family. As to quaternary structure, binds to the N-terminal domain of the chaperone ClpA.

Involved in the modulation of the specificity of the ClpAP-mediated ATP-dependent protein degradation. The chain is ATP-dependent Clp protease adapter protein ClpS from Gluconobacter oxydans (strain 621H) (Gluconobacter suboxydans).